A 199-amino-acid chain; its full sequence is Superoxide dismutase [Mn] 2 (199 aa).

Residues H28, H75, D157, and H161 each contribute to the Mn(2+) site.

This sequence belongs to the iron/manganese superoxide dismutase family. Mn(2+) is required as a cofactor.

The catalysed reaction is 2 superoxide + 2 H(+) = H2O2 + O2. In terms of biological role, destroys superoxide anion radicals which are normally produced within the cells and which are toxic to biological systems. The sequence is that of Superoxide dismutase [Mn] 2 (sod2) from Haloferax volcanii (strain ATCC 29605 / DSM 3757 / JCM 8879 / NBRC 14742 / NCIMB 2012 / VKM B-1768 / DS2) (Halobacterium volcanii).